Here is a 302-residue protein sequence, read N- to C-terminus: NAD kinase 1 (302 aa).

Asp67 functions as the Proton acceptor in the catalytic mechanism. Residues 67-68 (DG), Arg72, 148-149 (ND), Lys178, and Asp180 each bind NAD(+).

Belongs to the NAD kinase family. A divalent metal cation serves as cofactor.

The protein resides in the cytoplasm. It carries out the reaction NAD(+) + ATP = ADP + NADP(+) + H(+). In terms of biological role, involved in the regulation of the intracellular balance of NAD and NADP, and is a key enzyme in the biosynthesis of NADP. Catalyzes specifically the phosphorylation on 2'-hydroxyl of the adenosine moiety of NAD to yield NADP. The polypeptide is NAD kinase 1 (Prochlorococcus marinus (strain NATL2A)).